We begin with the raw amino-acid sequence, 736 residues long: Subtilisin-like protease SBT4.11 (736 aa).

Positions 1-25 are cleaved as a signal peptide; that stretch reads MAKRGAFSSFHSFLIVLLFLNSVLA. The propeptide at 26-113 is activation peptide; sequence VTHGHQDKQV…VFPNKKLKLQ (88 aa). An Inhibitor I9 domain is found at 35–112; the sequence is VYIVYMGSLP…SVFPNKKLKL (78 aa). The 463-residue stretch at 117-579 folds into the Peptidase S8 domain; it reads SWDFMGLKEG…AGHVDPIAAT (463 aa). The Charge relay system role is filled by Asp145. Asn176 carries N-linked (GlcNAc...) asparagine glycosylation. His200 serves as the catalytic Charge relay system. Residues Asn215 and Asn223 are each glycosylated (N-linked (GlcNAc...) asparagine). Residues 355 to 437 enclose the PA domain; it reads KFPLVYGKSA…GLQKDDFESV (83 aa). The Charge relay system role is filled by Ser518. N-linked (GlcNAc...) asparagine glycans are attached at residues Asn555, Asn602, Asn638, Asn646, and Asn656.

Belongs to the peptidase S8 family. In terms of processing, the C-terminal propeptide is autocleaved.

It is found in the secreted. The chain is Subtilisin-like protease SBT4.11 from Arabidopsis thaliana (Mouse-ear cress).